We begin with the raw amino-acid sequence, 126 residues long: MEVLEGLYYSKDHEWVKVEGDKAYIGITDYAQHSLGNIVYIELPEVGAELSAGDVLGVVESVKAASDVYTPVDGKVLEVNNAIVDDPSLVNNDPYGSWMALVELKDKSQLDNLMTAEEYKKFLDEE.

In terms of domain architecture, Lipoyl-binding spans 22–103 (KAYIGITDYA…PYGSWMALVE (82 aa)). At Lys-63 the chain carries N6-lipoyllysine.

Belongs to the GcvH family. The glycine cleavage system is composed of four proteins: P, T, L and H. The cofactor is (R)-lipoate.

Functionally, the glycine cleavage system catalyzes the degradation of glycine. The H protein shuttles the methylamine group of glycine from the P protein to the T protein. The sequence is that of Glycine cleavage system H protein from Thermoanaerobacter sp. (strain X514).